We begin with the raw amino-acid sequence, 141 residues long: Large ribosomal subunit protein uL11 (141 aa).

The protein belongs to the universal ribosomal protein uL11 family. Part of the ribosomal stalk of the 50S ribosomal subunit. Interacts with L10 and the large rRNA to form the base of the stalk. L10 forms an elongated spine to which L12 dimers bind in a sequential fashion forming a multimeric L10(L12)X complex. In terms of processing, one or more lysine residues are methylated.

Forms part of the ribosomal stalk which helps the ribosome interact with GTP-bound translation factors. The sequence is that of Large ribosomal subunit protein uL11 from Geobacillus thermodenitrificans (strain NG80-2).